The chain runs to 481 residues: Cholesterol 16,22-dihydroxylase CYP90G4 (481 aa).

Residues 4–24 (SYLSFFVLSSILVLTLIFFFM) form a helical membrane-spanning segment. Residue C426 participates in heme binding.

The protein belongs to the cytochrome P450 family. As to expression, mainly expressed in leaves and seed pods and, at low levels, in flowers and stems.

Its subcellular location is the membrane. It participates in steroid metabolism; cholesterol metabolism. Involved in the biosynthesis of spiroketal steroid and saponin natural products from cholesterol such as diosgenin and analogs (e.g. furostanol and spirostanol), plant defense compounds used as main precursors for the industrial production of steroid hormones. During the 5,6-spiroketalization of cholesterol, catalyzes the hydroxylation of cholesterol to form 16S,22S-dihydroxycholesterol and, possibly, the subsequent conversion of 16S,22S-dihydroxycholesterol into 16-oxo-22-hydroxy-cholesterol and 16-hydroxy-22-oxo-cholesterol. 16-hydroxy-22-oxo-cholesterol submit a spontaneous reaction leading to the production of furostanol-type steroid diastereomers, precursors of diosgenin. The chain is Cholesterol 16,22-dihydroxylase CYP90G4 from Trigonella foenum-graecum (Fenugreek).